The sequence spans 549 residues: Chaperonin GroEL (549 aa).

ATP contacts are provided by residues 29–32 (TAGP), K50, 86–90 (DGTTT), G418, and D499.

Belongs to the chaperonin (HSP60) family. In terms of assembly, forms a cylinder of 14 subunits composed of two heptameric rings stacked back-to-back. Interacts with the co-chaperonin GroES.

It is found in the cytoplasm. It catalyses the reaction ATP + H2O + a folded polypeptide = ADP + phosphate + an unfolded polypeptide.. Functionally, together with its co-chaperonin GroES, plays an essential role in assisting protein folding. The GroEL-GroES system forms a nano-cage that allows encapsulation of the non-native substrate proteins and provides a physical environment optimized to promote and accelerate protein folding. This Wolbachia sp. subsp. Drosophila simulans (strain wRi) protein is Chaperonin GroEL.